Reading from the N-terminus, the 429-residue chain is Putative protease Do-like 14 (429 aa).

Residues 87–113 (KSEAPINDEKGVSVEASDSSSKPSNGY) form a disordered region. The tract at residues 113 to 338 (YLGRDTIANA…IRPWIGLKMV (226 aa)) is serine protease. Residues H165, D203, and S281 each act as charge relay system in the active site. The 107-residue stretch at 318–424 (IIEHFKKSGR…RVTLEVIPEE (107 aa)) folds into the PDZ domain.

The protein belongs to the peptidase S1C family.

In terms of biological role, putative serine protease. This Arabidopsis thaliana (Mouse-ear cress) protein is Putative protease Do-like 14 (DEGP14).